Here is a 482-residue protein sequence, read N- to C-terminus: Membrane-bound lytic murein transglycosylase F (482 aa).

Residues 1–18 (MKGLFLRIITALALLFWA) form the signal peptide. The tract at residues 19-267 (IDMVFPWQFL…NLKEKYLGHI (249 aa)) is non-LT domain. Residues 268 to 482 (SQFDYVDTRS…NLEEIKENED (215 aa)) are LT domain. The active site involves glutamate 312. Over residues 457–470 (ENQTTNDNANNESA) the composition is skewed to polar residues. Residues 457-482 (ENQTTNDNANNESAVKNLEEIKENED) form a disordered region. The segment covering 473–482 (NLEEIKENED) has biased composition (basic and acidic residues).

This sequence in the N-terminal section; belongs to the bacterial solute-binding protein 3 family. The protein in the C-terminal section; belongs to the transglycosylase Slt family.

The protein resides in the cell outer membrane. It carries out the reaction Exolytic cleavage of the (1-&gt;4)-beta-glycosidic linkage between N-acetylmuramic acid (MurNAc) and N-acetylglucosamine (GlcNAc) residues in peptidoglycan, from either the reducing or the non-reducing ends of the peptidoglycan chains, with concomitant formation of a 1,6-anhydrobond in the MurNAc residue.. In terms of biological role, murein-degrading enzyme that degrades murein glycan strands and insoluble, high-molecular weight murein sacculi, with the concomitant formation of a 1,6-anhydromuramoyl product. Lytic transglycosylases (LTs) play an integral role in the metabolism of the peptidoglycan (PG) sacculus. Their lytic action creates space within the PG sacculus to allow for its expansion as well as for the insertion of various structures such as secretion systems and flagella. The polypeptide is Membrane-bound lytic murein transglycosylase F (Haemophilus influenzae (strain PittGG)).